We begin with the raw amino-acid sequence, 89 residues long: Probable oxaloacetate decarboxylase gamma chain (89 aa).

The chain crosses the membrane as a helical span at residues 13–33; it reads LMLSGMGFVITFLLILIWAIT.

This sequence belongs to the OadG family. Heterotrimer of an alpha, a beta and a gamma subunit. It depends on Na(+) as a cofactor.

It is found in the cell membrane. It carries out the reaction oxaloacetate + 2 Na(+)(in) + H(+) = pyruvate + 2 Na(+)(out) + CO2. Catalyzes the decarboxylation of oxaloacetate coupled to Na(+) translocation. In Actinobacillus succinogenes (strain ATCC 55618 / DSM 22257 / CCUG 43843 / 130Z), this protein is Probable oxaloacetate decarboxylase gamma chain.